Here is a 216-residue protein sequence, read N- to C-terminus: Probable chemoreceptor glutamine deamidase CheD (216 aa).

It belongs to the CheD family.

The catalysed reaction is L-glutaminyl-[protein] + H2O = L-glutamyl-[protein] + NH4(+). Functionally, probably deamidates glutamine residues to glutamate on methyl-accepting chemotaxis receptors (MCPs), playing an important role in chemotaxis. This chain is Probable chemoreceptor glutamine deamidase CheD, found in Halorhodospira halophila (strain DSM 244 / SL1) (Ectothiorhodospira halophila (strain DSM 244 / SL1)).